Consider the following 210-residue polypeptide: Late histone H1 (210 aa).

Disordered regions lie at residues methionine 1–threonine 21 and serine 86–lysine 210. The region spanning alanine 17–lysine 91 is the H15 domain. The span at alanine 104–alanine 113 shows a compositional bias: basic residues. Positions lysine 114–alanine 123 are enriched in basic and acidic residues. Residues alanine 124–lysine 210 show a composition bias toward basic residues.

Belongs to the histone H1/H5 family.

The protein resides in the nucleus. The protein localises to the chromosome. In terms of biological role, histones H1 are necessary for the condensation of nucleosome chains into higher-order structures. In Lytechinus pictus (Painted sea urchin), this protein is Late histone H1.